A 136-amino-acid chain; its full sequence is Large ribosomal subunit protein uL16 (136 aa).

It belongs to the universal ribosomal protein uL16 family. As to quaternary structure, part of the 50S ribosomal subunit.

Functionally, binds 23S rRNA and is also seen to make contacts with the A and possibly P site tRNAs. The polypeptide is Large ribosomal subunit protein uL16 (Salmonella agona (strain SL483)).